The following is a 315-amino-acid chain: Cell division protein FtsZ (315 aa).

GTP is bound by residues 55 to 57 (GTG), glutamate 98, arginine 102, and aspartate 146.

The protein belongs to the FtsZ family. In terms of assembly, homodimer. Polymerizes to form a dynamic ring structure in a strictly GTP-dependent manner. Interacts directly with several other division proteins.

Its subcellular location is the cytoplasm. Its function is as follows. Essential cell division protein that forms a contractile ring structure (Z ring) at the future cell division site. The regulation of the ring assembly controls the timing and the location of cell division. One of the functions of the FtsZ ring is to recruit other cell division proteins to the septum to produce a new cell wall between the dividing cells. Binds GTP and shows GTPase activity. In Wolbachia pipientis, this protein is Cell division protein FtsZ.